The sequence spans 391 residues: Phosphoprotein (391 aa).

The segment at 1 to 194 (MDQFIKQDET…GSLSGATLYA (194 aa)) is N-terminus domain. A phosphothreonine mark is found at threonine 10, threonine 16, threonine 91, threonine 150, and threonine 165. Phosphoserine is present on serine 188. The interval 216-279 (ISANEIMDLL…MATVKIMDPG (64 aa)) is multimerization. Residues 218-245 (ANEIMDLLRGMDARLQHLEQKVDKVLAQ) are a coiled coil. Threonine 250 bears the Phosphothreonine mark. Residue serine 257 is modified to Phosphoserine. 2 positions are modified to phosphothreonine: threonine 258 and threonine 282. 2 positions are modified to phosphoserine: serine 292 and serine 294. Threonine 298 carries the phosphothreonine modification. Phosphoserine occurs at positions 301 and 374. The interaction with the nucleoprotein stretch occupies residues 343 to 391 (AGQKVMITKMITDCVANPQMKQAFEQRLAKASTEDALNDIKRDIIRSAI). Threonine 375 carries the phosphothreonine modification.

The protein belongs to the rubulavirus/avulavirus P protein family. Homotetramer. Interacts (via multimerization domain) with polymerase L; this interaction forms the polymerase L-P complex. Interacts (via N-terminus) with N0 (via Ncore); this interaction allows P to chaperon N0 to avoid N polymerization before encapsidation. Interacts (via C-terminus) with N-RNA template; this interaction positions the polymerase on the template for both transcription and replication. Interacts with host RPS6KB1 kinase; this interaction may play a role in the viral replication and transcription.

The protein localises to the virion. In terms of biological role, essential cofactor of the RNA polymerase L that plays a central role in the transcription and replication by forming the polymerase complex with RNA polymerase L and recruiting L to the genomic N-RNA template for RNA synthesis. Also plays a central role in the encapsidation of nascent RNA chains by forming the encapsidation complex with the nucleocapsid protein N (N-P complex). Acts as a chaperone for newly synthesized free N protein, so-called N0, allowing encapsidation of nascent RNA chains during replication. The nucleoprotein protein N prevents excessive phosphorylation of P, which leads to down-regulation of viral transcription/ replication. Participates, together with N, in the formation of viral factories (viroplasms), which are large inclusions in the host cytoplasm where replication takes place. The chain is Phosphoprotein from Homo sapiens (Human).